A 143-amino-acid polypeptide reads, in one-letter code: Hemoglobin subunit alpha (143 aa).

Positions 2 to 143 (SLTARDKSVV…LSAALADKYR (142 aa)) constitute a Globin domain. O2 is bound at residue His60. Position 89 (His89) interacts with heme b.

The protein belongs to the globin family. In terms of assembly, heterotetramer of two alpha chains and two beta chains. In terms of tissue distribution, red blood cells.

Functionally, involved in oxygen transport from gills to the various peripheral tissues. In Salmo salar (Atlantic salmon), this protein is Hemoglobin subunit alpha (hba).